The chain runs to 372 residues: Homoserine O-acetyltransferase (372 aa).

The 311-residue stretch at 43–353 (NAILIFHALT…DKGHDSFLLK (311 aa)) folds into the AB hydrolase-1 domain. Ser-148 (nucleophile) is an active-site residue. Arg-218 provides a ligand contact to substrate. Residues Asp-314 and His-347 contribute to the active site. Residue Asp-348 coordinates substrate.

Belongs to the AB hydrolase superfamily. MetX family. As to quaternary structure, homodimer.

It is found in the cytoplasm. It catalyses the reaction L-homoserine + acetyl-CoA = O-acetyl-L-homoserine + CoA. The protein operates within amino-acid biosynthesis; L-methionine biosynthesis via de novo pathway; O-acetyl-L-homoserine from L-homoserine: step 1/1. Functionally, transfers an acetyl group from acetyl-CoA to L-homoserine, forming acetyl-L-homoserine. The sequence is that of Homoserine O-acetyltransferase from Pelagibacter ubique (strain HTCC1062).